The primary structure comprises 394 residues: Elongation factor Tu (394 aa).

In terms of domain architecture, tr-type G spans 10 to 204 (KPHINVGTIG…YLDTYIPEPK (195 aa)). The interval 19-26 (GHVDHGKT) is G1. Position 19–26 (19–26 (GHVDHGKT)) interacts with GTP. A Mg(2+)-binding site is contributed by T26. A G2 region spans residues 60–64 (GITIN). Residues 81–84 (DCPG) form a G3 region. GTP is bound by residues 81 to 85 (DCPGH) and 136 to 139 (NKCD). Positions 136–139 (NKCD) are G4. A G5 region spans residues 174 to 176 (SAL).

It belongs to the TRAFAC class translation factor GTPase superfamily. Classic translation factor GTPase family. EF-Tu/EF-1A subfamily. In terms of assembly, monomer.

The protein localises to the cytoplasm. It carries out the reaction GTP + H2O = GDP + phosphate + H(+). In terms of biological role, GTP hydrolase that promotes the GTP-dependent binding of aminoacyl-tRNA to the A-site of ribosomes during protein biosynthesis. The polypeptide is Elongation factor Tu (Buchnera aphidicola subsp. Baizongia pistaciae (strain Bp)).